A 575-amino-acid polypeptide reads, in one-letter code: Isocitrate dehydrogenase kinase/phosphatase (575 aa).

ATP contacts are provided by residues 315–321 (APGIRGM) and Lys336. The active site involves Asp371.

This sequence belongs to the AceK family.

It is found in the cytoplasm. It catalyses the reaction L-seryl-[isocitrate dehydrogenase] + ATP = O-phospho-L-seryl-[isocitrate dehydrogenase] + ADP + H(+). Its function is as follows. Bifunctional enzyme which can phosphorylate or dephosphorylate isocitrate dehydrogenase (IDH) on a specific serine residue. This is a regulatory mechanism which enables bacteria to bypass the Krebs cycle via the glyoxylate shunt in response to the source of carbon. When bacteria are grown on glucose, IDH is fully active and unphosphorylated, but when grown on acetate or ethanol, the activity of IDH declines drastically concomitant with its phosphorylation. The protein is Isocitrate dehydrogenase kinase/phosphatase of Citrobacter koseri (strain ATCC BAA-895 / CDC 4225-83 / SGSC4696).